The sequence spans 656 residues: uncharacterized protein (656 aa).

3 helical membrane passes run 7–27 (QQVL…LNHL), 40–60 (LMAM…FWTL), and 210–230 (AVFI…AFTI). The region spanning 231–280 (TRPIRELLTGVKNIASGDFYQRIDLPFGGELGALIFNFNEMAERLEKYEQ) is the HAMP domain. One can recognise a PAS domain in the interval 289 to 359 (EKAKLETLVS…PILNDIIRKN (71 aa)). One can recognise a Histidine kinase domain in the interval 424–654 (NVSHELRTPL…CFFFDLMIAK (231 aa)). His427 is subject to Phosphohistidine; by autocatalysis.

It is found in the plastid. The protein localises to the chloroplast membrane. It carries out the reaction ATP + protein L-histidine = ADP + protein N-phospho-L-histidine.. This is an uncharacterized protein from Porphyra purpurea (Red seaweed).